Reading from the N-terminus, the 152-residue chain is Transcriptional regulator MraZ (152 aa).

SpoVT-AbrB domains lie at 5–52 (ATTL…PLPE) and 81–124 (ADDC…NEDA).

Belongs to the MraZ family. As to quaternary structure, forms oligomers.

It is found in the cytoplasm. It localises to the nucleoid. This chain is Transcriptional regulator MraZ, found in Idiomarina loihiensis (strain ATCC BAA-735 / DSM 15497 / L2-TR).